A 305-amino-acid chain; its full sequence is Serine/threonine-protein phosphatase PP2A catalytic subunit (305 aa).

Residues Asp-53, His-55, Asp-81, and Asn-113 each contribute to the Mn(2+) site. The active-site Proton donor is the His-114. Mn(2+)-binding residues include His-163 and His-237.

This sequence belongs to the PPP phosphatase family. PP-2A subfamily. It depends on Mn(2+) as a cofactor.

The enzyme catalyses O-phospho-L-seryl-[protein] + H2O = L-seryl-[protein] + phosphate. It carries out the reaction O-phospho-L-threonyl-[protein] + H2O = L-threonyl-[protein] + phosphate. This Helianthus annuus (Common sunflower) protein is Serine/threonine-protein phosphatase PP2A catalytic subunit.